A 217-amino-acid polypeptide reads, in one-letter code: MHLQSVARLTRQCHGLPLVELPPPYLAPSLHFSLIRTPVQCSSFSSTAVVGGRGRDLNKTRGVSAIHRTGPRFKLGVSKYPLPKPVSPAALEKREATPDHGLWGFFPRDRSALSTPEYDVAHGRSWSIQELREKSWEDLHCLWWVCVKERNRIATSNLERQRLKAGYGEWEASERDRTIRVTQNGIKHVLRERWYAWEDAKRLYKNGYRPQDEENQE.

This sequence belongs to the universal ribosomal protein uL29 family. As to quaternary structure, component of the mitochondrial large ribosomal subunit. Mature mitochondrial ribosomes consist of a small (37S) and a large (54S) subunit. The 37S subunit contains at least 33 different proteins and 1 molecule of RNA (15S). The 54S subunit contains at least 45 different proteins and 1 molecule of RNA (21S).

The protein resides in the mitochondrion. The polypeptide is Large ribosomal subunit protein uL29m (mrpl4) (Neosartorya fischeri (strain ATCC 1020 / DSM 3700 / CBS 544.65 / FGSC A1164 / JCM 1740 / NRRL 181 / WB 181) (Aspergillus fischerianus)).